The following is a 430-amino-acid chain: Glutamyl-tRNA reductase (430 aa).

Residues 50-53, Ser-108, 113-115, and Gln-119 contribute to the substrate site; these read TCNR and EPQ. Cys-51 serves as the catalytic Nucleophile. Residue 188–193 participates in NADP(+) binding; that stretch reads GAGEMA.

It belongs to the glutamyl-tRNA reductase family. Homodimer.

It carries out the reaction (S)-4-amino-5-oxopentanoate + tRNA(Glu) + NADP(+) = L-glutamyl-tRNA(Glu) + NADPH + H(+). It participates in porphyrin-containing compound metabolism; protoporphyrin-IX biosynthesis; 5-aminolevulinate from L-glutamyl-tRNA(Glu): step 1/2. Functionally, catalyzes the NADPH-dependent reduction of glutamyl-tRNA(Glu) to glutamate 1-semialdehyde (GSA). This is Glutamyl-tRNA reductase from Desulfovibrio desulfuricans (strain ATCC 27774 / DSM 6949 / MB).